We begin with the raw amino-acid sequence, 439 residues long: tRNA-2-methylthio-N(6)-dimethylallyladenosine synthase (439 aa).

An MTTase N-terminal domain is found at 2–119 (KYIYIKTWGC…LPKMIDEVEK (118 aa)). Residues cysteine 11, cysteine 48, cysteine 82, cysteine 156, cysteine 160, and cysteine 163 each contribute to the [4Fe-4S] cluster site. One can recognise a Radical SAM core domain in the interval 142–374 (KKKGYTADIS…QERINIQTML (233 aa)). In terms of domain architecture, TRAM spans 377 to 439 (RKMFGSIQSV…HTHSLKGELF (63 aa)).

The protein belongs to the methylthiotransferase family. MiaB subfamily. In terms of assembly, monomer. The cofactor is [4Fe-4S] cluster.

The protein localises to the cytoplasm. The enzyme catalyses N(6)-dimethylallyladenosine(37) in tRNA + (sulfur carrier)-SH + AH2 + 2 S-adenosyl-L-methionine = 2-methylsulfanyl-N(6)-dimethylallyladenosine(37) in tRNA + (sulfur carrier)-H + 5'-deoxyadenosine + L-methionine + A + S-adenosyl-L-homocysteine + 2 H(+). Catalyzes the methylthiolation of N6-(dimethylallyl)adenosine (i(6)A), leading to the formation of 2-methylthio-N6-(dimethylallyl)adenosine (ms(2)i(6)A) at position 37 in tRNAs that read codons beginning with uridine. This Buchnera aphidicola subsp. Acyrthosiphon pisum (strain APS) (Acyrthosiphon pisum symbiotic bacterium) protein is tRNA-2-methylthio-N(6)-dimethylallyladenosine synthase.